The chain runs to 380 residues: MEVNTKKRVVIGLSGGVDSSVSALLLKQQGYEVIGLFMANWDTVANFENNRESDKKHQGCESELDYQDAQAVAQKIGIPLYRVEFIKEYWNNVFEYFLSEYQKNRTPNPDILCNQFIKFDSFLNYAKNELKADYIAMGHYAKVKHTNNLSYLLKATDVNKDQTYFLCNLKQTQLQNALFPIGDLTKQQVRTIAKEYGLVTANKKDSTGICFIGERNFKYFLENYIPNQPGEIVNIVNNQIVGHHMGTMYYTIGQRKGLNLGGMNERMFVCEKDINKKIIYVSPLSLEDQYLISNQALVENMNFIEPYNPQIPISVRFRHRQNLVVVNSFLCIENTNNVLINYEPAKAITPGQYAVFYQNDHCIGGGVIAQTNANHKKINF.

Residues 12-19 and methionine 38 each bind ATP; that span reads GLSGGVDS. The tract at residues 108–110 is interaction with target base in tRNA; sequence NPD. The Nucleophile role is filled by cysteine 113. Cysteine 113 and cysteine 210 are joined by a disulfide. Residue glycine 138 participates in ATP binding. The interaction with tRNA stretch occupies residues 160–162; the sequence is KDQ. Cysteine 210 functions as the Cysteine persulfide intermediate in the catalytic mechanism.

This sequence belongs to the MnmA/TRMU family.

Its subcellular location is the cytoplasm. It carries out the reaction S-sulfanyl-L-cysteinyl-[protein] + uridine(34) in tRNA + AH2 + ATP = 2-thiouridine(34) in tRNA + L-cysteinyl-[protein] + A + AMP + diphosphate + H(+). Functionally, catalyzes the 2-thiolation of uridine at the wobble position (U34) of tRNA, leading to the formation of s(2)U34. The chain is tRNA-specific 2-thiouridylase MnmA from Ureaplasma urealyticum serovar 10 (strain ATCC 33699 / Western).